The following is a 639-amino-acid chain: Chaperone protein DnaK (639 aa).

Residue threonine 197 is modified to Phosphothreonine; by autocatalysis. A disordered region spans residues 600-639; sequence SGAQGGAQAGPDMNAGQSNAGQNNGKQDDNVQDADFEEVK. Over residues 613 to 624 the composition is skewed to low complexity; it reads NAGQSNAGQNNG. Over residues 629–639 the composition is skewed to acidic residues; that stretch reads NVQDADFEEVK.

Belongs to the heat shock protein 70 family.

Acts as a chaperone. The protein is Chaperone protein DnaK of Bacteroides fragilis (strain ATCC 25285 / DSM 2151 / CCUG 4856 / JCM 11019 / LMG 10263 / NCTC 9343 / Onslow / VPI 2553 / EN-2).